A 388-amino-acid polypeptide reads, in one-letter code: Succinate--CoA ligase [ADP-forming] subunit beta (388 aa).

Positions 9–244 (KQIFAKYKLP…PSQDDPREAL (236 aa)) constitute an ATP-grasp domain. Residues Lys-46, 53–55 (GRG), Glu-99, Ala-102, and Glu-107 contribute to the ATP site. Residues Asn-199 and Asp-213 each coordinate Mg(2+). Residues Asn-264 and 321–323 (GIV) each bind substrate.

Belongs to the succinate/malate CoA ligase beta subunit family. In terms of assembly, heterotetramer of two alpha and two beta subunits. The cofactor is Mg(2+).

It carries out the reaction succinate + ATP + CoA = succinyl-CoA + ADP + phosphate. The catalysed reaction is GTP + succinate + CoA = succinyl-CoA + GDP + phosphate. The protein operates within carbohydrate metabolism; tricarboxylic acid cycle; succinate from succinyl-CoA (ligase route): step 1/1. Functionally, succinyl-CoA synthetase functions in the citric acid cycle (TCA), coupling the hydrolysis of succinyl-CoA to the synthesis of either ATP or GTP and thus represents the only step of substrate-level phosphorylation in the TCA. The beta subunit provides nucleotide specificity of the enzyme and binds the substrate succinate, while the binding sites for coenzyme A and phosphate are found in the alpha subunit. This Glaesserella parasuis serovar 5 (strain SH0165) (Haemophilus parasuis) protein is Succinate--CoA ligase [ADP-forming] subunit beta.